Consider the following 365-residue polypeptide: Protein-glutamate methylesterase/protein-glutamine glutaminase 2 (365 aa).

The region spanning 18–135 (RVLIVDDSAM…GQGLPAIMRD (118 aa)) is the Response regulatory domain. Asp69 is modified (4-aspartylphosphate). A CheB-type methylesterase domain is found at 162–355 (GASEDWIHAL…ARMMLAAAAD (194 aa)). Residues Ser174, His200, and Asp297 contribute to the active site.

It belongs to the CheB family. In terms of processing, phosphorylated by CheA. Phosphorylation of the N-terminal regulatory domain activates the methylesterase activity.

Its subcellular location is the cytoplasm. It catalyses the reaction [protein]-L-glutamate 5-O-methyl ester + H2O = L-glutamyl-[protein] + methanol + H(+). It carries out the reaction L-glutaminyl-[protein] + H2O = L-glutamyl-[protein] + NH4(+). Its function is as follows. Involved in chemotaxis. Part of a chemotaxis signal transduction system that modulates chemotaxis in response to various stimuli. Catalyzes the demethylation of specific methylglutamate residues introduced into the chemoreceptors (methyl-accepting chemotaxis proteins or MCP) by CheR. Also mediates the irreversible deamidation of specific glutamine residues to glutamic acid. This chain is Protein-glutamate methylesterase/protein-glutamine glutaminase 2, found in Cereibacter sphaeroides (strain ATCC 17023 / DSM 158 / JCM 6121 / CCUG 31486 / LMG 2827 / NBRC 12203 / NCIMB 8253 / ATH 2.4.1.) (Rhodobacter sphaeroides).